The following is a 460-amino-acid chain: Homocitrate synthase (460 aa).

The 256-residue stretch at 3–258 folds into the Pyruvate carboxyltransferase domain; the sequence is VGILDSTLRE…IEVVKLNKLQ (256 aa). R11 contacts 2-oxoglutarate. Position 12 (E12) interacts with Mg(2+). Positions 75, 135, and 169 each coordinate 2-oxoglutarate. Residues H197 and H199 each contribute to the Mg(2+) site. H291 acts as the Proton acceptor in catalysis.

It belongs to the alpha-IPM synthase/homocitrate synthase family. Homocitrate synthase LYS20/LYS21 subfamily. As to quaternary structure, forms a homotetramer in the absence of lysine, and is in hexadecamer-octamer equilibrium in the presence of lysine. Mg(2+) is required as a cofactor. It depends on Mn(2+) as a cofactor.

The enzyme catalyses acetyl-CoA + 2-oxoglutarate + H2O = (2R)-homocitrate + CoA + H(+). The protein operates within amino-acid biosynthesis; L-lysine biosynthesis via AAA pathway; L-alpha-aminoadipate from 2-oxoglutarate: step 1/5. With respect to regulation, inhibited by lysine. Functionally, catalyzes the aldol-type condensation of 2-oxoglutarate with acetyl-CoA to yield homocitrate. Carries out the first step of the alpha-aminoadipate (AAA) lysine biosynthesis pathway. The sequence is that of Homocitrate synthase from Sulfurisphaera tokodaii (strain DSM 16993 / JCM 10545 / NBRC 100140 / 7) (Sulfolobus tokodaii).